Reading from the N-terminus, the 625-residue chain is Phosphomethylpyrimidine synthase (625 aa).

Substrate contacts are provided by residues asparagine 230, methionine 259, tyrosine 288, histidine 324, 344–346 (SRG), 385–388 (DGLR), and glutamate 424. Position 428 (histidine 428) interacts with Zn(2+). Residue tyrosine 451 participates in substrate binding. Residue histidine 492 participates in Zn(2+) binding. [4Fe-4S] cluster is bound by residues cysteine 572, cysteine 575, and cysteine 580.

This sequence belongs to the ThiC family. Homodimer. Requires [4Fe-4S] cluster as cofactor.

It carries out the reaction 5-amino-1-(5-phospho-beta-D-ribosyl)imidazole + S-adenosyl-L-methionine = 4-amino-2-methyl-5-(phosphooxymethyl)pyrimidine + CO + 5'-deoxyadenosine + formate + L-methionine + 3 H(+). It participates in cofactor biosynthesis; thiamine diphosphate biosynthesis. In terms of biological role, catalyzes the synthesis of the hydroxymethylpyrimidine phosphate (HMP-P) moiety of thiamine from aminoimidazole ribotide (AIR) in a radical S-adenosyl-L-methionine (SAM)-dependent reaction. The sequence is that of Phosphomethylpyrimidine synthase from Xanthomonas euvesicatoria pv. vesicatoria (strain 85-10) (Xanthomonas campestris pv. vesicatoria).